A 203-amino-acid chain; its full sequence is NAD(P)H dehydrogenase (quinone) (203 aa).

Positions Ile-3–Val-194 constitute a Flavodoxin-like domain. FMN is bound by residues Ser-9–Val-14 and Ala-82–Phe-84. Tyr-11 contributes to the NAD(+) binding site. Trp-102 is a binding site for substrate. Residues Ser-117–Gly-123 and His-138 each bind FMN.

The protein belongs to the WrbA family. Requires FMN as cofactor.

The catalysed reaction is a quinone + NADH + H(+) = a quinol + NAD(+). It catalyses the reaction a quinone + NADPH + H(+) = a quinol + NADP(+). This Syntrophus aciditrophicus (strain SB) protein is NAD(P)H dehydrogenase (quinone).